The following is a 467-amino-acid chain: 26S proteasome regulatory subunit 7 homolog (467 aa).

Disordered regions lie at residues 1–26 and 108–140; these read MPPK…DDKI and GNGE…DEDD. Residues 117-134 are compositionally biased toward low complexity; sequence TDNNNSGNSNSNSNQQST. Residues Ser164 and Ser231 each carry the phosphoserine modification. 250 to 257 is a binding site for ATP; sequence GPPGTGKT.

It belongs to the AAA ATPase family. In terms of assembly, interacts with UBR1 and CIC1. In terms of processing, the N-terminus is blocked.

The protein resides in the cytoplasm. It localises to the nucleus. In terms of biological role, the 26S proteasome is involved in the ATP-dependent degradation of ubiquitinated proteins. The regulatory (or ATPase) complex confers ATP dependency and substrate specificity to the 26S complex. The sequence is that of 26S proteasome regulatory subunit 7 homolog (RPT1) from Saccharomyces cerevisiae (strain ATCC 204508 / S288c) (Baker's yeast).